A 306-amino-acid polypeptide reads, in one-letter code: MSVRHFLTLLDLSPAELEALIKRASELRKMQHAGEVYQPFVGRTLGMIFEKSSTRTRISFETGMGQFGGHAIFLSPKDTQLGRGEPIEDSARVISSMVDIIMIRTFEHEKVEKFAQYSSVPIINALTDDFHPCQLLADMQTFYEHRGSIKDKIVTWVGDGNNMCSSFMAAANQFGFELRVAAPYGFEPNPELMEKFKHCVSLVDDVQDAAKDAHLIVTDVWASMGQESEQNTRARRFAPYQVTPSMLDKADPEVLFMHCLPAHRGEEISHDMLDDPRSVVWDEAENRLHAQKALMEFLLKDKIKLN.

Carbamoyl phosphate-binding positions include S53–T56, Q80, R104, and H131–Q134. Residues N162, D219, and S223–M224 contribute to the L-ornithine site. Carbamoyl phosphate is bound by residues C259–L260 and R287.

It belongs to the aspartate/ornithine carbamoyltransferase superfamily. OTCase family.

It localises to the cytoplasm. The catalysed reaction is carbamoyl phosphate + L-ornithine = L-citrulline + phosphate + H(+). It participates in amino-acid biosynthesis; L-arginine biosynthesis; L-arginine from L-ornithine and carbamoyl phosphate: step 1/3. Reversibly catalyzes the transfer of the carbamoyl group from carbamoyl phosphate (CP) to the N(epsilon) atom of ornithine (ORN) to produce L-citrulline. This Psychrobacter sp. (strain PRwf-1) protein is Ornithine carbamoyltransferase.